Reading from the N-terminus, the 280-residue chain is Ribosomal RNA small subunit methyltransferase A (280 aa).

S-adenosyl-L-methionine-binding residues include leucine 24, glycine 49, glutamate 70, aspartate 95, and asparagine 118.

It belongs to the class I-like SAM-binding methyltransferase superfamily. rRNA adenine N(6)-methyltransferase family. RsmA subfamily.

It is found in the cytoplasm. The enzyme catalyses adenosine(1518)/adenosine(1519) in 16S rRNA + 4 S-adenosyl-L-methionine = N(6)-dimethyladenosine(1518)/N(6)-dimethyladenosine(1519) in 16S rRNA + 4 S-adenosyl-L-homocysteine + 4 H(+). In terms of biological role, specifically dimethylates two adjacent adenosines (A1518 and A1519) in the loop of a conserved hairpin near the 3'-end of 16S rRNA in the 30S particle. May play a critical role in biogenesis of 30S subunits. The polypeptide is Ribosomal RNA small subunit methyltransferase A (Syntrophus aciditrophicus (strain SB)).